The primary structure comprises 171 residues: MATIGEVEVFVDHGADDVFITYPLWIGTRQADRLRQLADRARIAVGAGTAEGASNTGARLADAAGAIDVLIEIDSGHHRSGVRAEQVLEVAHAVGEAGLHLVGVFTFPGHSYAPGKPGEAGEQERRALNDAANALVAVGFPISCRSGGSTPTALLTAADGASETSRRLCAR.

This is an uncharacterized protein from Mycobacterium tuberculosis (strain ATCC 25618 / H37Rv).